We begin with the raw amino-acid sequence, 378 residues long: Cell surface mannoprotein MP65 (378 aa).

Positions 1-32 are cleaved as a signal peptide; sequence MLFKSFVTFTVLANALAAPLAHQHHQHKEEKR. The interval 67-124 is disordered; it reads VSVSVNTEPPQNHPTTTQDVASASTYPSSTDGSAASSSAAASSSSQAGSEPSGGVGSG. Residues 72-93 are compositionally biased toward polar residues; the sequence is NTEPPQNHPTTTQDVASASTYP. Residues 94–116 show a composition bias toward low complexity; the sequence is SSTDGSAASSSAAASSSSQAGSE. Glu-316 serves as the catalytic Nucleophile.

It belongs to the glycosyl hydrolase 17 family. Component of a multiprotein complex of 250 kDa composed of at least HYR1, MP65, and PRA1. Post-translationally, glycosylated protein with a polysaccharide moiety composed exclusively of mannose and glucose at a ratio of 12.7 to 1. Contributes highly to the carbohydrate component of the matrix. Treatment with tunicamycin impairs glycosylation.

It is found in the secreted. Its subcellular location is the cell wall. Functionally, surface mannoprotein required for hyphal morphogenesis, surface adherence, and pathogenicity. Contributes in a high proportion to the carbohydrate component of the matrix due to high levels of glycosylation and may play important roles during biofilm development and maintenance. Acts as a major antigen target of host cell-mediated immune response. Induces extensive T-cell proliferation of human peripheral blood mononuclear cells. Facilitates host dendritic cells maturation and promotes cytokine production through its glycosylated portion while its protein core is essentially involved in induction of T-cell response. This Candida albicans (strain SC5314 / ATCC MYA-2876) (Yeast) protein is Cell surface mannoprotein MP65 (MP65).